The chain runs to 109 residues: ATPase inhibitor mai-2, mitochondrial (109 aa).

Disordered stretches follow at residues arginine 17–aspartate 39 and glutamine 73–arginine 95. The segment covering glycine 21–glycine 35 has biased composition (gly residues). Residues glycine 45–glutamate 109 adopt a coiled-coil conformation.

It belongs to the ATPase inhibitor family.

The protein resides in the mitochondrion. In terms of biological role, thought to be a regulatory component of the ATP-synthesizing complex in the mitochondria. This is ATPase inhibitor mai-2, mitochondrial from Caenorhabditis briggsae.